Here is a 339-residue protein sequence, read N- to C-terminus: Ketol-acid reductoisomerase (NADP(+)) (339 aa).

In terms of domain architecture, KARI N-terminal Rossmann spans 1 to 182 (MRVYYDRDAD…GGGRSGIIET (182 aa)). Residues 24 to 27 (YGSQ), Arg48, Ser51, Thr53, and 83 to 86 (DEHQ) each bind NADP(+). His108 is an active-site residue. Gly134 lines the NADP(+) pocket. The KARI C-terminal knotted domain maps to 183 to 328 (NFREECETDL…ARLRGMMPWI (146 aa)). Residues Asp191, Glu195, Glu227, and Glu231 each coordinate Mg(2+). Ser252 contacts substrate.

This sequence belongs to the ketol-acid reductoisomerase family. It depends on Mg(2+) as a cofactor.

The enzyme catalyses (2R)-2,3-dihydroxy-3-methylbutanoate + NADP(+) = (2S)-2-acetolactate + NADPH + H(+). The catalysed reaction is (2R,3R)-2,3-dihydroxy-3-methylpentanoate + NADP(+) = (S)-2-ethyl-2-hydroxy-3-oxobutanoate + NADPH + H(+). The protein operates within amino-acid biosynthesis; L-isoleucine biosynthesis; L-isoleucine from 2-oxobutanoate: step 2/4. It functions in the pathway amino-acid biosynthesis; L-valine biosynthesis; L-valine from pyruvate: step 2/4. In terms of biological role, involved in the biosynthesis of branched-chain amino acids (BCAA). Catalyzes an alkyl-migration followed by a ketol-acid reduction of (S)-2-acetolactate (S2AL) to yield (R)-2,3-dihydroxy-isovalerate. In the isomerase reaction, S2AL is rearranged via a Mg-dependent methyl migration to produce 3-hydroxy-3-methyl-2-ketobutyrate (HMKB). In the reductase reaction, this 2-ketoacid undergoes a metal-dependent reduction by NADPH to yield (R)-2,3-dihydroxy-isovalerate. The polypeptide is Ketol-acid reductoisomerase (NADP(+)) (Caulobacter sp. (strain K31)).